The chain runs to 451 residues: NADH-quinone oxidoreductase subunit D (451 aa).

The protein belongs to the complex I 49 kDa subunit family. NDH-1 is composed of 14 different subunits. Subunits NuoB, C, D, E, F, and G constitute the peripheral sector of the complex.

Its subcellular location is the cell inner membrane. The catalysed reaction is a quinone + NADH + 5 H(+)(in) = a quinol + NAD(+) + 4 H(+)(out). Functionally, NDH-1 shuttles electrons from NADH, via FMN and iron-sulfur (Fe-S) centers, to quinones in the respiratory chain. The immediate electron acceptor for the enzyme in this species is believed to be a menaquinone. Couples the redox reaction to proton translocation (for every two electrons transferred, four hydrogen ions are translocated across the cytoplasmic membrane), and thus conserves the redox energy in a proton gradient. This Salinibacter ruber (strain DSM 13855 / M31) protein is NADH-quinone oxidoreductase subunit D.